Here is a 1176-residue protein sequence, read N- to C-terminus: Nitrite reductase [NAD(P)H] (1176 aa).

Positions 1–23 (MANTSLDMASSTSPSPSPESTTT) are disordered. The span at 10-23 (SSTSPSPSPESTTT) shows a compositional bias: low complexity. 26–60 (KRIVVVGLGMVGIAFIEKLIKLDTQRQYEIVVIGE) is a binding site for FAD. 183–215 (STGVVVGGGLLGLEAAKALMDLQVFGRVVVIER) provides a ligand contact to NAD(+). 4 residues coordinate [2Fe-2S] cluster: Cys-496, Cys-498, Cys-531, and Cys-534. Residues Cys-717, Cys-723, Cys-757, and Cys-761 each coordinate [4Fe-4S] cluster. Cys-761 lines the siroheme pocket. Positions 942 to 1094 (SYFQGADDLP…VEERDDGMVY (153 aa)) constitute a Rieske; atypical domain. The [2Fe-2S] cluster site is built by Cys-981 and His-983. Low complexity-rich tracts occupy residues 998-1008 (PSPSSCSSSAL) and 1030-1049 (PTSS…TNPS). Residues 998 to 1051 (PSPSSCSSSALPPSPPSTPPRSSSPVTSPPQSPTSSATPATTASSSCTTNPSGP) form a disordered region. [2Fe-2S] cluster is bound by residues Cys-1058 and His-1061. Positions 1124-1139 (LRELDELNKSKGVEGK) are enriched in basic and acidic residues. A disordered region spans residues 1124 to 1157 (LRELDELNKSKGVEGKKGRRGRKPGASEAGKEVG).

It belongs to the nitrite and sulfite reductase 4Fe-4S domain family. Homodimer. Siroheme is required as a cofactor. [4Fe-4S] cluster serves as cofactor. It depends on FAD as a cofactor. The cofactor is [2Fe-2S] cluster.

It carries out the reaction NH4(+) + 3 NADP(+) + 2 H2O = nitrite + 3 NADPH + 5 H(+). The catalysed reaction is NH4(+) + 3 NAD(+) + 2 H2O = nitrite + 3 NADH + 5 H(+). It participates in nitrogen metabolism; nitrate reduction (assimilation). This Neurospora crassa (strain ATCC 24698 / 74-OR23-1A / CBS 708.71 / DSM 1257 / FGSC 987) protein is Nitrite reductase [NAD(P)H] (nit-6).